The following is a 634-amino-acid chain: Chaperone protein HtpG (634 aa).

The a; substrate-binding stretch occupies residues methionine 1–arginine 342. The interval glutamate 343–glutamine 559 is b. The segment at leucine 560–alanine 634 is c.

It belongs to the heat shock protein 90 family. As to quaternary structure, homodimer.

It is found in the cytoplasm. Molecular chaperone. Has ATPase activity. This chain is Chaperone protein HtpG, found in Xanthomonas campestris pv. campestris (strain ATCC 33913 / DSM 3586 / NCPPB 528 / LMG 568 / P 25).